A 477-amino-acid chain; its full sequence is Bifunctional protein HldE (477 aa).

A ribokinase region spans residues 1–318 (MKVNLPAFER…ENAVRGRADT (318 aa)). 195 to 198 (NLSE) provides a ligand contact to ATP. Residue Asp264 is part of the active site. The segment at 344–477 (MTNGVFDILH…IKKIQTESEK (134 aa)) is cytidylyltransferase.

The protein in the N-terminal section; belongs to the carbohydrate kinase PfkB family. In the C-terminal section; belongs to the cytidylyltransferase family. In terms of assembly, homodimer.

It carries out the reaction D-glycero-beta-D-manno-heptose 7-phosphate + ATP = D-glycero-beta-D-manno-heptose 1,7-bisphosphate + ADP + H(+). The catalysed reaction is D-glycero-beta-D-manno-heptose 1-phosphate + ATP + H(+) = ADP-D-glycero-beta-D-manno-heptose + diphosphate. The protein operates within nucleotide-sugar biosynthesis; ADP-L-glycero-beta-D-manno-heptose biosynthesis; ADP-L-glycero-beta-D-manno-heptose from D-glycero-beta-D-manno-heptose 7-phosphate: step 1/4. It participates in nucleotide-sugar biosynthesis; ADP-L-glycero-beta-D-manno-heptose biosynthesis; ADP-L-glycero-beta-D-manno-heptose from D-glycero-beta-D-manno-heptose 7-phosphate: step 3/4. In terms of biological role, catalyzes the phosphorylation of D-glycero-D-manno-heptose 7-phosphate at the C-1 position to selectively form D-glycero-beta-D-manno-heptose-1,7-bisphosphate. Its function is as follows. Catalyzes the ADP transfer from ATP to D-glycero-beta-D-manno-heptose 1-phosphate, yielding ADP-D-glycero-beta-D-manno-heptose. In Salmonella paratyphi A (strain ATCC 9150 / SARB42), this protein is Bifunctional protein HldE.